Consider the following 560-residue polypeptide: Zorya protein ZorC (560 aa).

Its function is as follows. Component of antiviral defense system Zorya type I, composed of ZorA, ZorB, ZorC and ZorD. Expression of Zorya type I in E.coli (strain MG1655) confers 10,000-fold resistance to phage SECphi27, 100-fold resistance to lambda, and 10-fold resistance to T7. While most T7 infected Zorya-containing cells undergo abortive infection, a minority produce viable phage progeny. These eventually accumulate to a high multiplicity of infection, leading to culture collapse by 2 hours after initial infection. ZorA and ZorB probably assemble in the cell inner membrane and exert their effect there. In Escherichia coli O139:H28 (strain E24377A / ETEC), this protein is Zorya protein ZorC.